The primary structure comprises 239 residues: LexA repressor (239 aa).

The segment at residues Phe26–Thr46 is a DNA-binding region (H-T-H motif). Catalysis depends on for autocatalytic cleavage activity residues Ser159 and Lys197.

The protein belongs to the peptidase S24 family. Homodimer.

The enzyme catalyses Hydrolysis of Ala-|-Gly bond in repressor LexA.. Functionally, represses a number of genes involved in the response to DNA damage (SOS response), including recA and lexA. In the presence of single-stranded DNA, RecA interacts with LexA causing an autocatalytic cleavage which disrupts the DNA-binding part of LexA, leading to derepression of the SOS regulon and eventually DNA repair. The polypeptide is LexA repressor (Rhizobium etli (strain ATCC 51251 / DSM 11541 / JCM 21823 / NBRC 15573 / CFN 42)).